The primary structure comprises 175 residues: RNA pyrophosphohydrolase (175 aa).

The region spanning 6–149 (GYRPNVGIVI…KRDVYRRVMK (144 aa)) is the Nudix hydrolase domain. The Nudix box motif lies at 38-59 (GGINPGETPEQAMYRELFEEVG).

It belongs to the Nudix hydrolase family. RppH subfamily. A divalent metal cation serves as cofactor.

Accelerates the degradation of transcripts by removing pyrophosphate from the 5'-end of triphosphorylated RNA, leading to a more labile monophosphorylated state that can stimulate subsequent ribonuclease cleavage. In Yersinia enterocolitica serotype O:8 / biotype 1B (strain NCTC 13174 / 8081), this protein is RNA pyrophosphohydrolase.